Reading from the N-terminus, the 670-residue chain is Auxin response factor 16 (670 aa).

A DNA-binding region (TF-B3) is located at residues 120–222; sequence FAKTLTQSDA…DLCVGIRRAK (103 aa). Residues 545–557 show a composition bias toward polar residues; sequence KTQISSGGSNQNG. Positions 545–579 are disordered; the sequence is KTQISSGGSNQNGVAGREFSSSDEGSPCSKKVHDA. In terms of domain architecture, PB1 spans 584 to 664; the sequence is TGHCKVFMES…RRLTILTEQG (81 aa).

This sequence belongs to the ARF family. Homodimers and heterodimers.

It localises to the nucleus. Auxin response factors (ARFs) are transcriptional factors that bind specifically to the DNA sequence 5'-TGTCTC-3' found in the auxin-responsive promoter elements (AuxREs). Could act as transcriptional activator or repressor. Formation of heterodimers with Aux/IAA proteins may alter their ability to modulate early auxin response genes expression. The chain is Auxin response factor 16 (ARF16) from Arabidopsis thaliana (Mouse-ear cress).